The following is a 116-amino-acid chain: Large ribosomal subunit protein bL17 (116 aa).

Belongs to the bacterial ribosomal protein bL17 family. As to quaternary structure, part of the 50S ribosomal subunit. Contacts protein L32.

The protein is Large ribosomal subunit protein bL17 of Synechococcus sp. (strain RCC307).